Here is a 251-residue protein sequence, read N- to C-terminus: Hydroxyacylglutathione hydrolase (251 aa).

Zn(2+)-binding residues include histidine 53, histidine 55, aspartate 57, histidine 58, histidine 110, aspartate 127, and histidine 165.

This sequence belongs to the metallo-beta-lactamase superfamily. Glyoxalase II family. In terms of assembly, monomer. It depends on Zn(2+) as a cofactor.

It catalyses the reaction an S-(2-hydroxyacyl)glutathione + H2O = a 2-hydroxy carboxylate + glutathione + H(+). It functions in the pathway secondary metabolite metabolism; methylglyoxal degradation; (R)-lactate from methylglyoxal: step 2/2. Thiolesterase that catalyzes the hydrolysis of S-D-lactoyl-glutathione to form glutathione and D-lactic acid. The chain is Hydroxyacylglutathione hydrolase from Escherichia coli O6:H1 (strain CFT073 / ATCC 700928 / UPEC).